The chain runs to 535 residues: CTP synthase (535 aa).

An amidoligase domain region spans residues 1-266 (MKTKFIFITG…DEQVVEKLNI (266 aa)). Position 14 (S14) interacts with CTP. S14 is a binding site for UTP. Residues 15-20 (SIGKGL) and D72 contribute to the ATP site. D72 and E140 together coordinate Mg(2+). CTP-binding positions include 147 to 149 (DIE), 187 to 192 (KTKPTQ), and K223. Residues 187–192 (KTKPTQ) and K223 each bind UTP. In terms of domain architecture, Glutamine amidotransferase type-1 spans 292–534 (RIAIVGKYVN…IGASLTHRNQ (243 aa)). G354 provides a ligand contact to L-glutamine. C381 (nucleophile; for glutamine hydrolysis) is an active-site residue. L-glutamine is bound by residues 382-385 (LGMQ), E405, and R462. Residues H507 and E509 contribute to the active site.

It belongs to the CTP synthase family. Homotetramer.

It catalyses the reaction UTP + L-glutamine + ATP + H2O = CTP + L-glutamate + ADP + phosphate + 2 H(+). The enzyme catalyses L-glutamine + H2O = L-glutamate + NH4(+). The catalysed reaction is UTP + NH4(+) + ATP = CTP + ADP + phosphate + 2 H(+). It functions in the pathway pyrimidine metabolism; CTP biosynthesis via de novo pathway; CTP from UDP: step 2/2. Allosterically activated by GTP, when glutamine is the substrate; GTP has no effect on the reaction when ammonia is the substrate. The allosteric effector GTP functions by stabilizing the protein conformation that binds the tetrahedral intermediate(s) formed during glutamine hydrolysis. Inhibited by the product CTP, via allosteric rather than competitive inhibition. Catalyzes the ATP-dependent amination of UTP to CTP with either L-glutamine or ammonia as the source of nitrogen. Regulates intracellular CTP levels through interactions with the four ribonucleotide triphosphates. In Trichlorobacter lovleyi (strain ATCC BAA-1151 / DSM 17278 / SZ) (Geobacter lovleyi), this protein is CTP synthase.